A 902-amino-acid polypeptide reads, in one-letter code: Magnesium-transporting ATPase, P-type 1 (902 aa).

At 1 to 98 (MLKIITRQLF…KPSPWWVHLW (98 aa)) the chain is on the cytoplasmic side. The chain crosses the membrane as a helical span at residues 99 to 119 (VCYRNPFNILLTILGGISYAT). Glutamate 120 is a topological domain (extracellular). Residues 121-141 (DLFAAGVIALMVGISTLLNFV) traverse the membrane as a helical segment. At 142–291 (QEARSTKAAD…QNAFQKGISR (150 aa)) the chain is on the cytoplasmic side. The chain crosses the membrane as a helical span at residues 292–312 (VSMLLIRFMLVMAPVVLIING). Topologically, residues 313–321 (YTKGDWWEA) are extracellular. The chain crosses the membrane as a helical span at residues 322 to 339 (ALFALSVAVGLTPEMLPM). Glutamate 335 is a binding site for Mg(2+). Residues 340–699 (IVTSTLARGA…IEGRRTFSNM (360 aa)) lie on the Cytoplasmic side of the membrane. Residue aspartate 377 is the 4-aspartylphosphate intermediate of the active site. Residues aspartate 645, aspartate 649, and asparagine 713 each contribute to the Mg(2+) site. The helical transmembrane segment at 700–719 (LKYIKMTASSNFGNVFSVLV) threads the bilayer. Residues 720-728 (ASAFLPFLP) are Extracellular-facing. Residues 729–748 (MLPLHLLIQNLLYDVSQVAI) traverse the membrane as a helical segment. Residues asparagine 738 and aspartate 742 each coordinate Mg(2+). Topologically, residues 749–770 (PFDNVDEEQIQKPQRWNPADLG) are cytoplasmic. A helical transmembrane segment spans residues 771–794 (RFMVFFGPISSIFDILTFCLMWWV). Residues 795 to 803 (FHANTPETQ) are Extracellular-facing. Residues 804-822 (TLFQSGWFVVGLLSQTLIV) form a helical membrane-spanning segment. The Cytoplasmic portion of the chain corresponds to 823-835 (HMIRTRRLPFIQS). A helical membrane pass occupies residues 836–855 (RAAWPLMAMTLLVMVVGVSL). Over 856 to 870 (PFSPLASYLQLQALP) the chain is Extracellular. The chain crosses the membrane as a helical span at residues 871–890 (LSYFPWLIAILVGYMTLTQL). Over 891-902 (VKGFYSRRYGWQ) the chain is Cytoplasmic.

It belongs to the cation transport ATPase (P-type) (TC 3.A.3) family. Type IIIB subfamily.

It is found in the cell inner membrane. The enzyme catalyses Mg(2+)(out) + ATP + H2O = Mg(2+)(in) + ADP + phosphate + H(+). Its function is as follows. Mediates magnesium influx to the cytosol. The sequence is that of Magnesium-transporting ATPase, P-type 1 (mgtA) from Salmonella typhimurium (strain 14028s / SGSC 2262).